A 98-amino-acid chain; its full sequence is MSLTYMNMFMAFTISLLGLLMYRSHMMSSLLCLEGMMLSLFVMMTMVILNTHLTLASMIPIILLVFAACEAALGLSLLVMVSTTYGMDYVQNLNLLQC.

3 consecutive transmembrane segments (helical) span residues 1–21 (MSLT…GLLM), 29–49 (SLLC…MVIL), and 61–81 (IILL…LVMV).

This sequence belongs to the complex I subunit 4L family. In terms of assembly, core subunit of respiratory chain NADH dehydrogenase (Complex I) which is composed of 45 different subunits.

It is found in the mitochondrion inner membrane. The enzyme catalyses a ubiquinone + NADH + 5 H(+)(in) = a ubiquinol + NAD(+) + 4 H(+)(out). In terms of biological role, core subunit of the mitochondrial membrane respiratory chain NADH dehydrogenase (Complex I) which catalyzes electron transfer from NADH through the respiratory chain, using ubiquinone as an electron acceptor. Part of the enzyme membrane arm which is embedded in the lipid bilayer and involved in proton translocation. The sequence is that of NADH-ubiquinone oxidoreductase chain 4L (MT-ND4L) from Vampyressa thyone (Northern little yellow-eared bat).